Reading from the N-terminus, the 137-residue chain is Phosphatidylinositol N-acetylglucosaminyltransferase subunit P (137 aa).

The next 2 membrane-spanning stretches (helical) occupy residues 16 to 36 (VYGF…LIWG) and 58 to 78 (MAMP…YIGL).

The protein belongs to the PIGP family.

Its subcellular location is the membrane. The enzyme catalyses a 1,2-diacyl-sn-glycero-3-phospho-(1D-myo-inositol) + UDP-N-acetyl-alpha-D-glucosamine = a 6-(N-acetyl-alpha-D-glucosaminyl)-1-(1,2-diacyl-sn-glycero-3-phospho)-1D-myo-inositol + UDP + H(+). It participates in glycolipid biosynthesis; glycosylphosphatidylinositol-anchor biosynthesis. Its function is as follows. Part of the complex catalyzing the transfer of N-acetylglucosamine from UDP-N-acetylglucosamine to phosphatidylinositol, the first step of GPI biosynthesis. The sequence is that of Phosphatidylinositol N-acetylglucosaminyltransferase subunit P from Arabidopsis thaliana (Mouse-ear cress).